Here is a 146-residue protein sequence, read N- to C-terminus: UPF0178 protein Lin1493 (146 aa).

This sequence belongs to the UPF0178 family.

The protein is UPF0178 protein Lin1493 of Listeria innocua serovar 6a (strain ATCC BAA-680 / CLIP 11262).